Here is a 466-residue protein sequence, read N- to C-terminus: Cysteine--tRNA ligase (466 aa).

C33 is a binding site for Zn(2+). The 'HIGH' region signature appears at 35-45 (PTVYDFAHIGN). Zn(2+) is bound by residues C221, H246, and E250. The 'KMSKS' region motif lies at 279–283 (KMSKS). Residue K282 coordinates ATP.

This sequence belongs to the class-I aminoacyl-tRNA synthetase family. In terms of assembly, monomer. It depends on Zn(2+) as a cofactor.

It localises to the cytoplasm. It catalyses the reaction tRNA(Cys) + L-cysteine + ATP = L-cysteinyl-tRNA(Cys) + AMP + diphosphate. This is Cysteine--tRNA ligase from Sinorhizobium medicae (strain WSM419) (Ensifer medicae).